We begin with the raw amino-acid sequence, 176 residues long: MKFLFDLFPIILFFVAFKVWGIFTATAVAIVATLAQVAWVAFRHRKVDTMLWVSLGVIVVFGGATLVLHDEKFIQWKPTVLYWLFAIGLLAARYAFSKNLIEKMMGKQLTLPSPVWDKLNLAWALFFAVLGVANLYVVHNFTESQWVNFKLFGTTGAMVVFIILQSLWLTKYLKDE.

6 consecutive transmembrane segments (helical) span residues 3–23, 24–44, 49–69, 72–92, 121–141, and 149–169; these read FLFD…WGIF, TATA…AFRH, TMLW…LVLH, KFIQ…LLAA, LAWA…VHNF, and FKLF…SLWL.

It belongs to the YciB family.

The protein localises to the cell inner membrane. Functionally, plays a role in cell envelope biogenesis, maintenance of cell envelope integrity and membrane homeostasis. The sequence is that of Inner membrane-spanning protein YciB from Burkholderia cenocepacia (strain ATCC BAA-245 / DSM 16553 / LMG 16656 / NCTC 13227 / J2315 / CF5610) (Burkholderia cepacia (strain J2315)).